The primary structure comprises 184 residues: UPF0398 protein BCG9842_B3730 (184 aa).

The protein belongs to the UPF0398 family.

This chain is UPF0398 protein BCG9842_B3730, found in Bacillus cereus (strain G9842).